A 132-amino-acid polypeptide reads, in one-letter code: Vacuolar protein sorting-associated protein 55 homolog (132 aa).

4 consecutive transmembrane segments (helical) span residues 7–27, 32–52, 68–88, and 98–118; these read VAALAFAGVVGLTFLVLGCAL, TWTPMFVITFYVLSPVPLLIA, LALFITTGIVISAFALPIVLA, and CFLVNTGSVIMFGTIIAYFYL.

It belongs to the OB-RGRP/VPS55 family.

It localises to the endosome membrane. Functionally, involved in endosomal protein transport. This Caenorhabditis elegans protein is Vacuolar protein sorting-associated protein 55 homolog.